Here is a 397-residue protein sequence, read N- to C-terminus: uncharacterized protein (397 aa).

The tract at residues 368-391 is disordered; the sequence is TTKPGLHQPTQKRPTQTTSKPYIN. Positions 375 to 388 are enriched in polar residues; sequence QPTQKRPTQTTSKP.

This is an uncharacterized protein from Acanthamoeba polyphaga mimivirus (APMV).